The chain runs to 460 residues: MQEINRDAQTIAAVATAVAPGQGGIAVIRLSGPQAQAAVQSVTRIPGQQSWESHRVLYGHVLAGESGERIDEVLVLLMLAPRSFTGEDVVEIHCHGGVIAVQRVLARVLDQPGVRRALPGEFSQRAVLNGRLDLTRAEAISDLVAARSQRAAELAMAGVDGGIQKRITALRDRLLDQLSELEARVDFEEDLPALDGAALLEELQRVRGALQQLVKDGQVGAALRQGLRVALVGRPNVGKSSLLNRLSRRERAIVTDLPGTTRDLLESEIVLEGVPITLLDTAGIRATSDAVERLGIARSHDALASADLVLLLFDLSVGWTPDDEALRQRIPAAVPHLLVGNKVDVAVSDARAGTSGSAADIRLSASTGAGEAELVQAVLERCGALADGSLLLSLNQRQGDLAQQAADALARSAQVAADGLPWDFWTIDLRQAIHSLGEITGEELTESVLDRIFSRFCIGK.

(6S)-5-formyl-5,6,7,8-tetrahydrofolate is bound by residues Arg29, Glu91, and Arg131. The TrmE-type G domain occupies 226–383; the sequence is GLRVALVGRP…LVQAVLERCG (158 aa). Asn236 is a binding site for K(+). Residues 236–241, 255–261, and 280–283 contribute to the GTP site; these read NVGKSS, TDLPGTT, and DTAG. Ser240 contributes to the Mg(2+) binding site. The K(+) site is built by Thr255, Leu257, and Thr260. Thr261 lines the Mg(2+) pocket. Lys460 provides a ligand contact to (6S)-5-formyl-5,6,7,8-tetrahydrofolate.

It belongs to the TRAFAC class TrmE-Era-EngA-EngB-Septin-like GTPase superfamily. TrmE GTPase family. As to quaternary structure, homodimer. Heterotetramer of two MnmE and two MnmG subunits. K(+) is required as a cofactor.

The protein resides in the cytoplasm. Its function is as follows. Exhibits a very high intrinsic GTPase hydrolysis rate. Involved in the addition of a carboxymethylaminomethyl (cmnm) group at the wobble position (U34) of certain tRNAs, forming tRNA-cmnm(5)s(2)U34. The polypeptide is tRNA modification GTPase MnmE (Synechococcus sp. (strain WH7803)).